The following is a 938-amino-acid chain: Isoleucine--tRNA ligase (938 aa).

Residues 58-68 (PYANGSIHIGH) carry the 'HIGH' region motif. Residue lysine 183 is modified to N6-acetyllysine. Residue glutamate 561 coordinates L-isoleucyl-5'-AMP. The 'KMSKS' region motif lies at 602-606 (KMSKS). Lysine 605 serves as a coordination point for ATP. Positions 901, 904, 921, and 924 each coordinate Zn(2+).

Belongs to the class-I aminoacyl-tRNA synthetase family. IleS type 1 subfamily. Monomer. The cofactor is Zn(2+).

It is found in the cytoplasm. The catalysed reaction is tRNA(Ile) + L-isoleucine + ATP = L-isoleucyl-tRNA(Ile) + AMP + diphosphate. Its function is as follows. Catalyzes the attachment of isoleucine to tRNA(Ile). As IleRS can inadvertently accommodate and process structurally similar amino acids such as valine, to avoid such errors it has two additional distinct tRNA(Ile)-dependent editing activities. One activity is designated as 'pretransfer' editing and involves the hydrolysis of activated Val-AMP. The other activity is designated 'posttransfer' editing and involves deacylation of mischarged Val-tRNA(Ile). The protein is Isoleucine--tRNA ligase of Escherichia coli (strain ATCC 8739 / DSM 1576 / NBRC 3972 / NCIMB 8545 / WDCM 00012 / Crooks).